Here is a 671-residue protein sequence, read N- to C-terminus: DNA ligase (671 aa).

Residues 34–38, 83–84, and glutamate 113 contribute to the NAD(+) site; these read DSEYD and SL. Lysine 115 (N6-AMP-lysine intermediate) is an active-site residue. Residues arginine 136, glutamate 170, lysine 286, and lysine 310 each contribute to the NAD(+) site. The Zn(2+) site is built by cysteine 404, cysteine 407, cysteine 422, and cysteine 427. The BRCT domain maps to 590 to 671; sequence EEAGVFAGKT…FTQAVEQSEQ (82 aa).

The protein belongs to the NAD-dependent DNA ligase family. LigA subfamily. Mg(2+) serves as cofactor. Requires Mn(2+) as cofactor.

The catalysed reaction is NAD(+) + (deoxyribonucleotide)n-3'-hydroxyl + 5'-phospho-(deoxyribonucleotide)m = (deoxyribonucleotide)n+m + AMP + beta-nicotinamide D-nucleotide.. Its function is as follows. DNA ligase that catalyzes the formation of phosphodiester linkages between 5'-phosphoryl and 3'-hydroxyl groups in double-stranded DNA using NAD as a coenzyme and as the energy source for the reaction. It is essential for DNA replication and repair of damaged DNA. The sequence is that of DNA ligase from Shouchella clausii (strain KSM-K16) (Alkalihalobacillus clausii).